A 364-amino-acid chain; its full sequence is MANVVLRNVRKTYPGGFEAIKGVDFEVGDGQFCVLVGPSGCGKSTLLRMVAGLETITAGEIDIGGRIVNQIEPADRDIAMVFQNYALYPHMSVYNNMAYGLRNRGMPKPEIDARVQEAARILEIGTMLDRKPRQLSGGQRQRVAMGRAIVRQPKVFLFDEPLSNLDAKLRVAMRVEIRKLQRRLGTTAIYVTHDQLEAMTLADILVVMNAGVVEQIGSPLEVYARPATTFVASFIGAPPMNLMLLDAEGVRARFGNAATGAGILGVRPEDLVISREPAATDGLSLDLTVEAIERVGPETFIYGTRSRAGDPTAVSSKPGELPPDDIIVRVPGQDAPAIGDHMFATALPQHLHLFSADGRRRIEL.

The 232-residue stretch at 4–235 (VVLRNVRKTY…PATTFVASFI (232 aa)) folds into the ABC transporter domain. 37–44 (GPSGCGKS) lines the ATP pocket.

The protein belongs to the ABC transporter superfamily. sn-glycerol-3-phosphate importer (TC 3.A.1.1.3) family. The complex is composed of two ATP-binding proteins (UgpC), two transmembrane proteins (UgpA and UgpE) and a solute-binding protein (UgpB).

The protein resides in the cell inner membrane. The catalysed reaction is sn-glycerol 3-phosphate(out) + ATP + H2O = sn-glycerol 3-phosphate(in) + ADP + phosphate + H(+). Functionally, part of the ABC transporter complex UgpBAEC involved in sn-glycerol-3-phosphate (G3P) import. Responsible for energy coupling to the transport system. The sequence is that of sn-glycerol-3-phosphate import ATP-binding protein UgpC from Rhodopseudomonas palustris (strain HaA2).